The chain runs to 737 residues: Palmitoyltransferase AKR1 (737 aa).

The interval 1 to 47 is disordered; that stretch reads MKQIDSEDSITVPNDTPEDNSASSMQPVMSNLSIEEHQSENEPIEQE. At 1–304 the chain is on the cytoplasmic side; that stretch reads MKQIDSEDSI…VYFKKSLHTK (304 aa). The segment covering 9-33 has biased composition (polar residues); it reads SITVPNDTPEDNSASSMQPVMSNLS. ANK repeat units follow at residues 54–84, 90–119, 124–153, 157–190, 194–223, and 227–256; these read PLLS…DLKH, ERVS…DVNF, LNAT…DPSV, QGFN…DIDC, NGRT…SVKA, and GGFT…DFFQ. The next 2 membrane-spanning stretches (helical) occupy residues 305 to 325 and 326 to 346; these read LVTF…FASI and HPIF…YTLK. Residues 347–364 are Cytoplasmic-facing; sequence KYVIPAYAQRNTRQSFLK. The chain crosses the membrane as a helical span at residues 365–385; sequence TPFLAGVFSGSVFWASYTWLT. Over 386 to 396 the chain is Lumenal; the sequence is RIMPLTLIEEP. Residues 397-417 traverse the membrane as a helical segment; that stretch reads ITNLLFFAGVVLLASLFVKLV. The Cytoplasmic portion of the chain corresponds to 418–493; it reads RSDPGLIPEE…YNDIGLRNHK (76 aa). The DHHC domain maps to 450-500; that stretch reads HFCISTWVRKPIRSKFSNFSRALVTRFDHFCPWIYNDIGLRNHKTFLFFIL. The active-site S-palmitoyl cysteine intermediate is Cys480. A helical transmembrane segment spans residues 494 to 514; that stretch reads TFLFFILCLETCIFVFLKLCM. Over 515–547 the chain is Lumenal; the sequence is EYFDVLEDTFEDDYDLNCGIFGEDLCAGFFFDT. The helical transmembrane segment at 548 to 568 threads the bilayer; sequence FTFLVLAWTCFQGIWVGFLTF. Topologically, residues 569-737 are cytoplasmic; sequence VQLFQTAKGV…ERHYLAEEIV (169 aa).

It belongs to the DHHC palmitoyltransferase family. AKR/ZDHHC17 subfamily.

It is found in the early endosome membrane. The protein resides in the golgi apparatus membrane. The enzyme catalyses L-cysteinyl-[protein] + hexadecanoyl-CoA = S-hexadecanoyl-L-cysteinyl-[protein] + CoA. Functionally, palmitoyltransferase specific for casein kinase 1. The polypeptide is Palmitoyltransferase AKR1 (AKR1) (Lachancea kluyveri (strain ATCC 58438 / CBS 3082 / BCRC 21498 / NBRC 1685 / JCM 7257 / NCYC 543 / NRRL Y-12651) (Yeast)).